A 133-amino-acid polypeptide reads, in one-letter code: Holo-[acyl-carrier-protein] synthase (133 aa).

Mg(2+) is bound by residues Asp8 and Glu57.

Belongs to the P-Pant transferase superfamily. AcpS family. It depends on Mg(2+) as a cofactor.

It localises to the cytoplasm. The catalysed reaction is apo-[ACP] + CoA = holo-[ACP] + adenosine 3',5'-bisphosphate + H(+). Its function is as follows. Transfers the 4'-phosphopantetheine moiety from coenzyme A to a Ser of acyl-carrier-protein. The chain is Holo-[acyl-carrier-protein] synthase from Bartonella tribocorum (strain CIP 105476 / IBS 506).